A 701-amino-acid chain; its full sequence is Glycine--tRNA ligase beta subunit (701 aa).

It belongs to the class-II aminoacyl-tRNA synthetase family. As to quaternary structure, tetramer of two alpha and two beta subunits.

It is found in the cytoplasm. It carries out the reaction tRNA(Gly) + glycine + ATP = glycyl-tRNA(Gly) + AMP + diphosphate. In Helicobacter pylori (strain G27), this protein is Glycine--tRNA ligase beta subunit.